A 165-amino-acid polypeptide reads, in one-letter code: Mediator of RNA polymerase II transcription subunit 10 (165 aa).

Disordered stretches follow at residues 54 to 81 and 143 to 165; these read SLHT…DPAL and LRGE…RERG. Positions 62–77 are enriched in polar residues; it reads TASTTAPNQYQSTNPN.

Belongs to the Mediator complex subunit 10 family. Component of the Mediator complex.

Its subcellular location is the nucleus. Its function is as follows. Component of the Mediator complex, a coactivator involved in the regulated transcription of nearly all RNA polymerase II-dependent genes. Mediator functions as a bridge to convey information from gene-specific regulatory proteins to the basal RNA polymerase II transcription machinery. Mediator is recruited to promoters by direct interactions with regulatory proteins and serves as a scaffold for the assembly of a functional preinitiation complex with RNA polymerase II and the general transcription factors. The chain is Mediator of RNA polymerase II transcription subunit 10 (nut2) from Emericella nidulans (strain FGSC A4 / ATCC 38163 / CBS 112.46 / NRRL 194 / M139) (Aspergillus nidulans).